We begin with the raw amino-acid sequence, 260 residues long: Salicylic acid-binding protein 2 (260 aa).

3 residues coordinate salicylate: Ala-13, Ser-81, and Lys-159. The active-site Acyl-ester intermediate is Ser-81. Residues Asp-210 and His-238 each act as charge relay system in the active site. Salicylate-binding residues include His-238, Leu-253, and His-257.

This sequence belongs to the AB hydrolase superfamily. Methylesterase family.

It catalyses the reaction methyl salicylate + H2O = salicylate + methanol + H(+). It functions in the pathway plant hormone biosynthesis. Esterase activity is down-regulated by salicylic acid (SA) or by tetraFA, a synthetic SA analog. In terms of biological role, required to convert methyl salicylate (MeSA) to salicylic acid (SA) as part of the signal transduction pathways that activate systemic acquired resistance in systemic tissue. MeSA is believed to be an inactive form that needs to be demethylated to exert a biological effect. Also able to catalyze the conversion of acibenzolar-S-methyl into acibenzolar to induce systemic acquired resistance. This is Salicylic acid-binding protein 2 from Nicotiana tabacum (Common tobacco).